Here is a 350-residue protein sequence, read N- to C-terminus: MGVNLKDLIPEEAKMTIEDLRMLRGKIVVIDGYNALYQFLTAIRQPDGTPLMDSQGRITSHLSGLFYRTINILENGIKPAYVFDGKPPEIKAKEIEKRRKIREDASKKYEEALRKGDIEAARRYAMMSAKLTDEMVQDAKKLLDAMGIPWIQAPAEGEAQAAYIVSKGDAWASASQDYDSLLFGSPRLIRNLTISGKRKLPRKNVYIEIKPEIIELKKLLEKLGLTREQLIYVAILIGTDYNPDGVKGIGPKKALQLVKAYKTLDKILKIIPKTEFPIEPEKIVEYFLNPPVSTDYKLEWRAPDESKIREILVEEHDFNPERVKNAVERLVKAYREHIKSKQLGLEAWFS.

Residues 1–102 are N-domain; that stretch reads MGVNLKDLIP…KEIEKRRKIR (102 aa). Residues D31, D84, E156, E158, D177, D179, and D240 each contribute to the Mg(2+) site. The I-domain stretch occupies residues 120 to 262; sequence AARRYAMMSA…KALQLVKAYK (143 aa). Residues 341–349 are interaction with PCNA; sequence KQLGLEAWF.

This sequence belongs to the XPG/RAD2 endonuclease family. FEN1 subfamily. In terms of assembly, interacts with PCNA. PCNA stimulates the nuclease activity without altering cleavage specificity. Requires Mg(2+) as cofactor.

In terms of biological role, structure-specific nuclease with 5'-flap endonuclease and 5'-3' exonuclease activities involved in DNA replication and repair. During DNA replication, cleaves the 5'-overhanging flap structure that is generated by displacement synthesis when DNA polymerase encounters the 5'-end of a downstream Okazaki fragment. Binds the unpaired 3'-DNA end and kinks the DNA to facilitate 5' cleavage specificity. Cleaves one nucleotide into the double-stranded DNA from the junction in flap DNA, leaving a nick for ligation. Also involved in the base excision repair (BER) pathway. Acts as a genome stabilization factor that prevents flaps from equilibrating into structures that lead to duplications and deletions. Also possesses 5'-3' exonuclease activity on nicked or gapped double-stranded DNA. This Staphylothermus marinus (strain ATCC 43588 / DSM 3639 / JCM 9404 / F1) protein is Flap endonuclease 1.